Here is a 294-residue protein sequence, read N- to C-terminus: ATP synthase gamma chain (294 aa).

This sequence belongs to the ATPase gamma chain family. As to quaternary structure, F-type ATPases have 2 components, CF(1) - the catalytic core - and CF(0) - the membrane proton channel. CF(1) has five subunits: alpha(3), beta(3), gamma(1), delta(1), epsilon(1). CF(0) has three main subunits: a, b and c.

The protein localises to the cell inner membrane. Functionally, produces ATP from ADP in the presence of a proton gradient across the membrane. The gamma chain is believed to be important in regulating ATPase activity and the flow of protons through the CF(0) complex. The sequence is that of ATP synthase gamma chain from Nitrosomonas europaea (strain ATCC 19718 / CIP 103999 / KCTC 2705 / NBRC 14298).